The primary structure comprises 307 residues: 4-hydroxythreonine-4-phosphate dehydrogenase (307 aa).

Residues H126 and T127 each coordinate substrate. The a divalent metal cation site is built by H156, H195, and H251. Residues K259, N268, and R277 each contribute to the substrate site.

This sequence belongs to the PdxA family. As to quaternary structure, homodimer. Zn(2+) serves as cofactor. Requires Mg(2+) as cofactor. Co(2+) is required as a cofactor.

Its subcellular location is the cytoplasm. The catalysed reaction is 4-(phosphooxy)-L-threonine + NAD(+) = 3-amino-2-oxopropyl phosphate + CO2 + NADH. Its pathway is cofactor biosynthesis; pyridoxine 5'-phosphate biosynthesis; pyridoxine 5'-phosphate from D-erythrose 4-phosphate: step 4/5. Catalyzes the NAD(P)-dependent oxidation of 4-(phosphooxy)-L-threonine (HTP) into 2-amino-3-oxo-4-(phosphooxy)butyric acid which spontaneously decarboxylates to form 3-amino-2-oxopropyl phosphate (AHAP). The polypeptide is 4-hydroxythreonine-4-phosphate dehydrogenase (Helicobacter pylori (strain HPAG1)).